The following is a 579-amino-acid chain: XK-related protein 7 (579 aa).

The segment covering 1–18 (MAAKSDGAAASAGPDPEG) has biased composition (low complexity). The interval 1 to 40 (MAAKSDGAAASAGPDPEGAAGGARGSAGGRGEAAAAAGPP) is disordered. Positions 19–31 (AAGGARGSAGGRG) are enriched in gly residues. The next 2 helical transmembrane spans lie at 59 to 79 (WVLC…WLAA) and 89 to 109 (YFSL…LLSF). Residues 146-165 (GAFRTKEGSPEPGPQPAPSS) are disordered. The next 5 helical transmembrane spans lie at 260–280 (LLPA…LASY), 314–334 (GLAF…CIVG), 355–375 (GEEI…WFNV), 384–404 (MTLY…FWYS), and 415–435 (LIMV…MCVY). The disordered stretch occupies residues 466–510 (ADAITSPPRSLPRTTGAERDGASAGERAGTPTPPVFQVRPGLPPT).

This sequence belongs to the XK family.

It localises to the cell membrane. This is XK-related protein 7 (XKR7) from Pan troglodytes (Chimpanzee).